Reading from the N-terminus, the 155-residue chain is Endoribonuclease YbeY (155 aa).

Zn(2+) is bound by residues histidine 118, histidine 122, and histidine 128.

This sequence belongs to the endoribonuclease YbeY family. Zn(2+) serves as cofactor.

It is found in the cytoplasm. Single strand-specific metallo-endoribonuclease involved in late-stage 70S ribosome quality control and in maturation of the 3' terminus of the 16S rRNA. This Bordetella petrii (strain ATCC BAA-461 / DSM 12804 / CCUG 43448) protein is Endoribonuclease YbeY.